The following is a 25-amino-acid chain: Caerin-2.4 (25 aa).

In terms of tissue distribution, expressed by the skin parotoid and/or rostral glands.

Its subcellular location is the secreted. Functionally, antibacterial peptide, that adopts an alpha helical conformation which can disrupt bacterial membranes. Each caerin displays a different antimicrobial specificity. The sequence is that of Caerin-2.4 from Ranoidea caerulea (Green tree frog).